A 91-amino-acid polypeptide reads, in one-letter code: Acylphosphatase (91 aa).

An Acylphosphatase-like domain is found at 6–91 (CMRCYISGRV…WKDYISFDVL (86 aa)). Catalysis depends on residues R21 and N39.

The protein belongs to the acylphosphatase family.

It carries out the reaction an acyl phosphate + H2O = a carboxylate + phosphate + H(+). The chain is Acylphosphatase (acyP) from Legionella pneumophila (strain Paris).